Consider the following 421-residue polypeptide: Tubulin gamma-3 chain (421 aa).

GTP is bound at residue 94 to 100 (AGGTGSG).

This sequence belongs to the tubulin family.

It localises to the cytoplasm. It is found in the cytoskeleton. Its subcellular location is the microtubule organizing center. In terms of biological role, tubulin is the major constituent of microtubules. The gamma chain is found at microtubule organizing centers (MTOC) such as the spindle poles, suggesting that it is involved in the minus-end nucleation of microtubule assembly. This is Tubulin gamma-3 chain (TUBG3) from Zea mays (Maize).